Consider the following 439-residue polypeptide: Proline--tRNA ligase (439 aa).

This sequence belongs to the class-II aminoacyl-tRNA synthetase family. ProS type 2 subfamily. As to quaternary structure, homodimer.

It is found in the cytoplasm. It catalyses the reaction tRNA(Pro) + L-proline + ATP = L-prolyl-tRNA(Pro) + AMP + diphosphate. Catalyzes the attachment of proline to tRNA(Pro) in a two-step reaction: proline is first activated by ATP to form Pro-AMP and then transferred to the acceptor end of tRNA(Pro). This Phenylobacterium zucineum (strain HLK1) protein is Proline--tRNA ligase.